We begin with the raw amino-acid sequence, 290 residues long: Probable 2-(5''-triphosphoribosyl)-3'-dephosphocoenzyme-A synthase (290 aa).

It belongs to the CitG/MdcB family.

The catalysed reaction is 3'-dephospho-CoA + ATP = 2'-(5''-triphospho-alpha-D-ribosyl)-3'-dephospho-CoA + adenine. Its function is as follows. Involved in the formation of 2-(5''-phosphoribosyl)-3'-dephosphocoenzyme-A, the prosthetic group of the acyl-carrier protein of the malonate decarboxylase. This Stutzerimonas stutzeri (strain A1501) (Pseudomonas stutzeri) protein is Probable 2-(5''-triphosphoribosyl)-3'-dephosphocoenzyme-A synthase.